Here is a 104-residue protein sequence, read N- to C-terminus: Large ribosomal subunit protein uL24 (104 aa).

The span at arginine 82–lysine 92 shows a compositional bias: basic and acidic residues. The disordered stretch occupies residues arginine 82–isoleucine 104. Positions arginine 93–isoleucine 104 are enriched in basic residues.

The protein belongs to the universal ribosomal protein uL24 family. Part of the 50S ribosomal subunit.

Functionally, one of two assembly initiator proteins, it binds directly to the 5'-end of the 23S rRNA, where it nucleates assembly of the 50S subunit. Its function is as follows. One of the proteins that surrounds the polypeptide exit tunnel on the outside of the subunit. This Nocardia farcinica (strain IFM 10152) protein is Large ribosomal subunit protein uL24.